We begin with the raw amino-acid sequence, 195 residues long: Shikimate kinase (195 aa).

ATP is bound at residue 31–36; it reads GAGKSC. S35 is a Mg(2+) binding site. Residues D53, R77, and G99 each contribute to the substrate site. ATP is bound at residue R137. R156 is a binding site for substrate.

This sequence belongs to the shikimate kinase family. Monomer. The cofactor is Mg(2+).

It is found in the cytoplasm. The catalysed reaction is shikimate + ATP = 3-phosphoshikimate + ADP + H(+). Its pathway is metabolic intermediate biosynthesis; chorismate biosynthesis; chorismate from D-erythrose 4-phosphate and phosphoenolpyruvate: step 5/7. In terms of biological role, catalyzes the specific phosphorylation of the 3-hydroxyl group of shikimic acid using ATP as a cosubstrate. The chain is Shikimate kinase from Paramagnetospirillum magneticum (strain ATCC 700264 / AMB-1) (Magnetospirillum magneticum).